The chain runs to 362 residues: NAD(P)H-quinone oxidoreductase subunit 1, chloroplastic (362 aa).

The next 7 helical transmembrane spans lie at 26-48 (LIWI…VIVW), 97-119 (FSIG…PLGY), 126-148 (LSIG…LMAG), 163-185 (AAAQ…SLLS), 254-276 (LFYL…LYLG), 296-318 (IIGI…LFLF), and 338-360 (LGWK…FQLV).

This sequence belongs to the complex I subunit 1 family. As to quaternary structure, NDH is composed of at least 16 different subunits, 5 of which are encoded in the nucleus.

Its subcellular location is the plastid. The protein localises to the chloroplast thylakoid membrane. It catalyses the reaction a plastoquinone + NADH + (n+1) H(+)(in) = a plastoquinol + NAD(+) + n H(+)(out). The catalysed reaction is a plastoquinone + NADPH + (n+1) H(+)(in) = a plastoquinol + NADP(+) + n H(+)(out). NDH shuttles electrons from NAD(P)H:plastoquinone, via FMN and iron-sulfur (Fe-S) centers, to quinones in the photosynthetic chain and possibly in a chloroplast respiratory chain. The immediate electron acceptor for the enzyme in this species is believed to be plastoquinone. Couples the redox reaction to proton translocation, and thus conserves the redox energy in a proton gradient. This chain is NAD(P)H-quinone oxidoreductase subunit 1, chloroplastic (ndhA), found in Zea mays (Maize).